The following is a 185-amino-acid chain: Superoxide dismutase [Cu-Zn] (185 aa).

An N-terminal signal peptide occupies residues 1 to 18 (MTAFYKLCGMSMLSLVLA). Residues His85, His87, and His102 each coordinate Cu cation. A disulfide bridge links Cys92 with Cys180. Zn(2+)-binding residues include His102, His111, His120, and Asp123. His158 contacts Cu cation.

The protein belongs to the Cu-Zn superoxide dismutase family. In terms of assembly, homodimer. The cofactor is Cu cation. Zn(2+) serves as cofactor.

Its subcellular location is the periplasm. The catalysed reaction is 2 superoxide + 2 H(+) = H2O2 + O2. Functionally, destroys radicals which are normally produced within the cells and which are toxic to biological systems. The protein is Superoxide dismutase [Cu-Zn] (sodC) of Francisella tularensis subsp. holarctica (strain LVS).